The sequence spans 241 residues: 7-cyano-7-deazaguanine synthase (241 aa).

ATP is bound at residue 9–19; it reads LSGGLDSSTVL. Zn(2+) contacts are provided by C189, C197, C200, and C203.

The protein belongs to the QueC family. The cofactor is Zn(2+).

It carries out the reaction 7-carboxy-7-deazaguanine + NH4(+) + ATP = 7-cyano-7-deazaguanine + ADP + phosphate + H2O + H(+). Its pathway is purine metabolism; 7-cyano-7-deazaguanine biosynthesis. Its function is as follows. Catalyzes the ATP-dependent conversion of 7-carboxy-7-deazaguanine (CDG) to 7-cyano-7-deazaguanine (preQ(0)). The sequence is that of 7-cyano-7-deazaguanine synthase from Thermoplasma volcanium (strain ATCC 51530 / DSM 4299 / JCM 9571 / NBRC 15438 / GSS1).